Here is a 167-residue protein sequence, read N- to C-terminus: Peptidyl-prolyl cis-trans isomerase-like 3 (167 aa).

A PPIase cyclophilin-type domain is found at 1–160; sequence MSVTLHTTLG…EEVRIERVTV (160 aa).

The protein belongs to the cyclophilin-type PPIase family. PPIL3 subfamily.

The enzyme catalyses [protein]-peptidylproline (omega=180) = [protein]-peptidylproline (omega=0). Functionally, PPIases accelerate the folding of proteins. It catalyzes the cis-trans isomerization of proline imidic peptide bonds in oligopeptides. The polypeptide is Peptidyl-prolyl cis-trans isomerase-like 3 (cyp-10) (Neurospora crassa (strain ATCC 24698 / 74-OR23-1A / CBS 708.71 / DSM 1257 / FGSC 987)).